The chain runs to 260 residues: Indole-3-glycerol phosphate synthase (260 aa).

Belongs to the TrpC family.

It catalyses the reaction 1-(2-carboxyphenylamino)-1-deoxy-D-ribulose 5-phosphate + H(+) = (1S,2R)-1-C-(indol-3-yl)glycerol 3-phosphate + CO2 + H2O. It functions in the pathway amino-acid biosynthesis; L-tryptophan biosynthesis; L-tryptophan from chorismate: step 4/5. This is Indole-3-glycerol phosphate synthase from Lactiplantibacillus plantarum (strain ATCC BAA-793 / NCIMB 8826 / WCFS1) (Lactobacillus plantarum).